A 71-amino-acid chain; its full sequence is Ubiquinol-cytochrome c reductase complex assembly factor 6 (71 aa).

At Met1–Ser8 the chain is on the mitochondrial matrix side. Residues Thr9–Ala25 form a helical; Signal-anchor for type II membrane protein membrane-spanning segment. Over Glu26–Lys71 the chain is Mitochondrial intermembrane.

It belongs to the UQCC6 family. As to quaternary structure, interacts with UQCRC1. Interacts with UQCRQ. Interacts with UQCC5. Forms a complex, named COMB/coordinator of mitochondrial CYTB biogenesis, composed of UQCC1, UQCC2, UQCC4, UQCC5 and UQCC6; stabilizes nascent cytochrome b/MT-CYB and promotes its membrane insertion. Forms a complex, named COMA, composed of UQCC1, UQCC2 and UQCC4; activates MT-CYB translation. Forms a complex, named COMC, composed of UQCC1, UQCC2; UQCC3 and UQCC4; mediates MT-CYB hemylation and association with the first nuclear-encoded complex III subunit UQCRQ. Interacts with MT-CYB. In terms of tissue distribution, cardiac and skeletal muscle (at protein level).

Its subcellular location is the mitochondrion inner membrane. In terms of biological role, required for the assembly and stability of the mitochondrial ubiquinol-cytochrome c reductase complex (complex III (CIII) or cytochrome b-c1 complex), a multisubunit transmembrane complex that is part of the mitochondrial electron transport chain (ETC) which drives oxidative phosphorylation. Mediates early complex III biogenesis. Participates in regulating the levels of electron transport chain proteins, and therefore energy supply, in response to changes in energy demand. Also required for cytochrome c oxidase complex (complex IV) assembly. In Homo sapiens (Human), this protein is Ubiquinol-cytochrome c reductase complex assembly factor 6.